The chain runs to 417 residues: MLSRSIGKAAGGLVLGLSVAAAAHAAPLFEPVTVLSRAAAGSEPALGKLLATPSTATVQEVRVDAAATAQPQLEFELLGQRVQAVRSKVESLPDGGSIWYGQFRSPSDRLTAATSNGQDDPGNSVILVRSGNTVTGSIRKDGKLYRLRPLGNRHVLVEVDESRMPADHPADYNQLPKIPMGNNDRIGIAQASSGTPATIRVLVVATNAAVAAYGGNMQSLVQLAVAESNQGYVNSNVGITLQLAGYETTSYTESGNFTTDLTRFRNTSDGYMDSIHTSRNNTAADVGVLLINNTSYCGLASGIGSTASTAFAAVYWDCATGYYSFAHEIGHLQSARHDIASDPSTSPYAYGHGYRYEPASGSRWRTIMAYDCSAGCPRLNYWSNPNISYNGVPMGIASSADNQRVLVNTKATIAAFR.

The signal sequence occupies residues 1–25 (MLSRSIGKAAGGLVLGLSVAAAAHA). His-327 is a Zn(2+) binding site. Glu-328 is a catalytic residue. Residues His-331 and His-337 each contribute to the Zn(2+) site.

Belongs to the peptidase M72 family. Requires Zn(2+) as cofactor.

It carries out the reaction Cleavage of Xaa-|-Asp, Xaa-|-Glu and Xaa-|-cysteic acid bonds.. Functionally, metalloprotease, specifically cleaves on the N-terminal side of aspartyl, glutamyl and cysteic acid residues. The protein is Peptidyl-Asp metalloendopeptidase of Stenotrophomonas maltophilia (strain R551-3).